Consider the following 541-residue polypeptide: Membrane protein insertase YidC (541 aa).

Helical transmembrane passes span 6–26, 325–345, 349–369, 420–440, 457–477, and 500–520; these read NILL…WQAD, LVVD…LLMF, FVGN…GLLF, GGCL…WVLL, LSVQ…MFVM, and VIFT…WLVG.

Belongs to the OXA1/ALB3/YidC family. Type 1 subfamily. In terms of assembly, interacts with the Sec translocase complex via SecD. Specifically interacts with transmembrane segments of nascent integral membrane proteins during membrane integration.

It localises to the cell inner membrane. Functionally, required for the insertion and/or proper folding and/or complex formation of integral membrane proteins into the membrane. Involved in integration of membrane proteins that insert both dependently and independently of the Sec translocase complex, as well as at least some lipoproteins. Aids folding of multispanning membrane proteins. The chain is Membrane protein insertase YidC from Shewanella baltica (strain OS195).